A 602-amino-acid polypeptide reads, in one-letter code: Probable beta-glucosidase btgE (602 aa).

The N-terminal stretch at 1–18 (MRGAFLAAAAAVAGTAMA) is a signal peptide. Disordered stretches follow at residues 61–94 (PPTLVPINTPAPEPSSSSSSEVPSVPSSESSVVT) and 116–166 (GVDA…TSFS). Over residues 74 to 94 (PSSSSSSEVPSVPSSESSVVT) the composition is skewed to low complexity. Positions 152-166 (TSESPLPTPGVTSFS) are enriched in polar residues. The active-site Proton donor is the glutamate 443. The active-site Nucleophile is the glutamate 538.

Belongs to the glycosyl hydrolase 17 family.

Its subcellular location is the secreted. It localises to the cell wall. The enzyme catalyses Hydrolysis of terminal, non-reducing beta-D-glucosyl residues with release of beta-D-glucose.. It participates in glycan metabolism; cellulose degradation. Beta-glucosidases are one of a number of cellulolytic enzymes involved in the degradation of cellulosic biomass. Catalyzes the last step releasing glucose from the inhibitory cellobiose. The chain is Probable beta-glucosidase btgE (btgE) from Aspergillus flavus (strain ATCC 200026 / FGSC A1120 / IAM 13836 / NRRL 3357 / JCM 12722 / SRRC 167).